Consider the following 501-residue polypeptide: Lysine--tRNA ligase (501 aa).

2 residues coordinate Mg(2+): E411 and E418.

Belongs to the class-II aminoacyl-tRNA synthetase family. Homodimer. It depends on Mg(2+) as a cofactor.

The protein resides in the cytoplasm. It catalyses the reaction tRNA(Lys) + L-lysine + ATP = L-lysyl-tRNA(Lys) + AMP + diphosphate. The chain is Lysine--tRNA ligase from Thiobacillus denitrificans (strain ATCC 25259 / T1).